The primary structure comprises 123 residues: UPF0102 protein VFMJ11_2324 (123 aa).

Belongs to the UPF0102 family.

In Aliivibrio fischeri (strain MJ11) (Vibrio fischeri), this protein is UPF0102 protein VFMJ11_2324.